A 427-amino-acid polypeptide reads, in one-letter code: Probable purple acid phosphatase 20 (427 aa).

The first 21 residues, 1 to 21, serve as a signal peptide directing secretion; that stretch reads MVKVLGLVAILLIVLAGNVLS. The N-linked (GlcNAc...) asparagine glycan is linked to N85. Positions 147, 174, and 177 each coordinate Fe cation. D174 provides a ligand contact to Zn(2+). 2 residues coordinate Zn(2+): N207 and H291. N207 serves as a coordination point for substrate. H301 functions as the Proton donor in the catalytic mechanism. H330 contributes to the Zn(2+) binding site. 330–332 serves as a coordination point for substrate; sequence HVH. A Fe cation-binding site is contributed by H332. The N-linked (GlcNAc...) asparagine glycan is linked to N392.

The protein belongs to the metallophosphoesterase superfamily. Purple acid phosphatase family. In terms of assembly, homodimer. Fe cation is required as a cofactor. The cofactor is Zn(2+). In terms of tissue distribution, expressed flowers and siliques.

It localises to the secreted. The catalysed reaction is a phosphate monoester + H2O = an alcohol + phosphate. The sequence is that of Probable purple acid phosphatase 20 (PAP20) from Arabidopsis thaliana (Mouse-ear cress).